The primary structure comprises 542 residues: Chaperonin GroEL (542 aa).

ATP is bound by residues 29–32, 86–90, glycine 413, 478–480, and aspartate 494; these read TLGP, DGTTT, and DAL.

Belongs to the chaperonin (HSP60) family. As to quaternary structure, forms a cylinder of 14 subunits composed of two heptameric rings stacked back-to-back. Interacts with the co-chaperonin GroES.

The protein resides in the cytoplasm. It catalyses the reaction ATP + H2O + a folded polypeptide = ADP + phosphate + an unfolded polypeptide.. Together with its co-chaperonin GroES, plays an essential role in assisting protein folding. The GroEL-GroES system forms a nano-cage that allows encapsulation of the non-native substrate proteins and provides a physical environment optimized to promote and accelerate protein folding. The sequence is that of Chaperonin GroEL from Clostridioides difficile (strain 630) (Peptoclostridium difficile).